Reading from the N-terminus, the 555-residue chain is Chaperonin GroEL (555 aa).

Residues 29 to 32 (TLGP), K50, 86 to 90 (DGTTT), G418, and D499 contribute to the ATP site. Positions 528–555 (HEEDNNTGNRSGGGVGGGHHGGMGGMDF) are disordered. Residues 537–555 (RSGGGVGGGHHGGMGGMDF) show a composition bias toward gly residues.

The protein belongs to the chaperonin (HSP60) family. As to quaternary structure, forms a cylinder of 14 subunits composed of two heptameric rings stacked back-to-back. Interacts with the co-chaperonin GroES.

The protein localises to the cytoplasm. It carries out the reaction ATP + H2O + a folded polypeptide = ADP + phosphate + an unfolded polypeptide.. Together with its co-chaperonin GroES, plays an essential role in assisting protein folding. The GroEL-GroES system forms a nano-cage that allows encapsulation of the non-native substrate proteins and provides a physical environment optimized to promote and accelerate protein folding. The polypeptide is Chaperonin GroEL (Orientia tsutsugamushi (Rickettsia tsutsugamushi)).